A 188-amino-acid polypeptide reads, in one-letter code: Elongation factor P (188 aa).

Belongs to the elongation factor P family.

Its subcellular location is the cytoplasm. Its pathway is protein biosynthesis; polypeptide chain elongation. Its function is as follows. Involved in peptide bond synthesis. Stimulates efficient translation and peptide-bond synthesis on native or reconstituted 70S ribosomes in vitro. Probably functions indirectly by altering the affinity of the ribosome for aminoacyl-tRNA, thus increasing their reactivity as acceptors for peptidyl transferase. The sequence is that of Elongation factor P from Nitrosospira multiformis (strain ATCC 25196 / NCIMB 11849 / C 71).